An 87-amino-acid chain; its full sequence is Small ribosomal subunit protein uS17 (87 aa).

It belongs to the universal ribosomal protein uS17 family. As to quaternary structure, part of the 30S ribosomal subunit.

Its function is as follows. One of the primary rRNA binding proteins, it binds specifically to the 5'-end of 16S ribosomal RNA. This Bacillus cereus (strain ATCC 14579 / DSM 31 / CCUG 7414 / JCM 2152 / NBRC 15305 / NCIMB 9373 / NCTC 2599 / NRRL B-3711) protein is Small ribosomal subunit protein uS17.